Consider the following 324-residue polypeptide: Rho crystallin (324 aa).

Thr-2 bears the N-acetylthreonine mark. An NADP(+)-binding site is contributed by 218–281 (SVLGSHRDRN…SFTPARIKQN (64 aa)).

The protein belongs to the aldo/keto reductase family. As to quaternary structure, monomer.

This Rana temporaria (European common frog) protein is Rho crystallin.